The following is a 313-amino-acid chain: Beta-ketoacyl-[acyl-carrier-protein] synthase III (313 aa).

Active-site residues include Cys112 and His238. The segment at 239–243 (QANIR) is ACP-binding. The active site involves Asn268.

The protein belongs to the thiolase-like superfamily. FabH family. Homodimer.

It localises to the cytoplasm. The catalysed reaction is malonyl-[ACP] + acetyl-CoA + H(+) = 3-oxobutanoyl-[ACP] + CO2 + CoA. It participates in lipid metabolism; fatty acid biosynthesis. Its function is as follows. Catalyzes the condensation reaction of fatty acid synthesis by the addition to an acyl acceptor of two carbons from malonyl-ACP. Catalyzes the first condensation reaction which initiates fatty acid synthesis and may therefore play a role in governing the total rate of fatty acid production. Possesses both acetoacetyl-ACP synthase and acetyl transacylase activities. Its substrate specificity determines the biosynthesis of branched-chain and/or straight-chain of fatty acids. This chain is Beta-ketoacyl-[acyl-carrier-protein] synthase III, found in Staphylococcus epidermidis (strain ATCC 35984 / DSM 28319 / BCRC 17069 / CCUG 31568 / BM 3577 / RP62A).